The sequence spans 176 residues: Cytochrome b561 homolog 1 (176 aa).

Residues 1–7 are Cytoplasmic-facing; the sequence is MNRFSKT. Residues 8 to 28 traverse the membrane as a helical segment; sequence QIYLHWITLLFVAITYAAMEL. His12 is a heme b binding site. The Periplasmic portion of the chain corresponds to 29–45; it reads RGWFPKGSSTYLLMRET. His46 is a binding site for heme b. Residues 46–63 traverse the membrane as a helical segment; that stretch reads HYNAGIFVWVLMFSRLII. The Cytoplasmic segment spans residues 64–85; that stretch reads KHRYSDPSIVPPPPAWQMKAAS. A helical transmembrane segment spans residues 86–106; sequence LMHIMLYITFLALPLLGIALM. Residues 107–141 are Periplasmic-facing; that stretch reads AYSGKSWSFLGFNVSPFVTPNSEIKALIKNIHETW. His138 and His152 together coordinate heme b. A helical membrane pass occupies residues 142–162; sequence ANIGYFLIAAHAGAALFHHYI. Topologically, residues 163-176 are cytoplasmic; it reads QKDNTLLRMMPRRK.

Belongs to the cytochrome b561 family. Heme b serves as cofactor.

The protein localises to the cell inner membrane. In Escherichia coli (strain K12), this protein is Cytochrome b561 homolog 1 (yodB).